The primary structure comprises 195 residues: Orotate phosphoribosyltransferase (195 aa).

Residues Arg-86, Lys-90, His-92, and 111-119 contribute to the 5-phospho-alpha-D-ribose 1-diphosphate site; that span reads DDVATTGVS. Thr-115 and Arg-143 together coordinate orotate.

Belongs to the purine/pyrimidine phosphoribosyltransferase family. PyrE subfamily. Homodimer. The cofactor is Mg(2+).

The catalysed reaction is orotidine 5'-phosphate + diphosphate = orotate + 5-phospho-alpha-D-ribose 1-diphosphate. Its pathway is pyrimidine metabolism; UMP biosynthesis via de novo pathway; UMP from orotate: step 1/2. Its function is as follows. Catalyzes the transfer of a ribosyl phosphate group from 5-phosphoribose 1-diphosphate to orotate, leading to the formation of orotidine monophosphate (OMP). This chain is Orotate phosphoribosyltransferase, found in Saccharolobus solfataricus (strain ATCC 35092 / DSM 1617 / JCM 11322 / P2) (Sulfolobus solfataricus).